A 153-amino-acid chain; its full sequence is Endoribonuclease YbeY (153 aa).

3 residues coordinate Zn(2+): His116, His120, and His126.

The protein belongs to the endoribonuclease YbeY family. The cofactor is Zn(2+).

It localises to the cytoplasm. Its function is as follows. Single strand-specific metallo-endoribonuclease involved in late-stage 70S ribosome quality control and in maturation of the 3' terminus of the 16S rRNA. In Paraburkholderia phytofirmans (strain DSM 17436 / LMG 22146 / PsJN) (Burkholderia phytofirmans), this protein is Endoribonuclease YbeY.